The chain runs to 147 residues: Methylglyoxal synthase (147 aa).

Residues 1–147 (MKGQRNIGMV…TPYVKRLGAK (147 aa)) enclose the MGS-like domain. Substrate-binding positions include histidine 12, lysine 16, 38 to 41 (TGTT), and 59 to 60 (SG). The active-site Proton donor/acceptor is aspartate 65. Histidine 92 provides a ligand contact to substrate.

This sequence belongs to the methylglyoxal synthase family.

It carries out the reaction dihydroxyacetone phosphate = methylglyoxal + phosphate. Its function is as follows. Catalyzes the formation of methylglyoxal from dihydroxyacetone phosphate. The polypeptide is Methylglyoxal synthase (Oleidesulfovibrio alaskensis (strain ATCC BAA-1058 / DSM 17464 / G20) (Desulfovibrio alaskensis)).